The chain runs to 83 residues: Large ribosomal subunit protein eL37 (83 aa).

4 residues coordinate Zn(2+): C19, C22, C34, and C37. Residues 19–37 (CRRCGRNSYHVQWERCAAC) form a C4-type zinc finger.

It belongs to the eukaryotic ribosomal protein eL37 family. The cofactor is Zn(2+).

Its function is as follows. Binds to the 23S rRNA. This chain is Large ribosomal subunit protein eL37 (RPL37), found in Leishmania donovani.